A 458-amino-acid chain; its full sequence is Monomethylamine methyltransferase MtmB1 (458 aa).

Position 202 (pyrrolysine 202) is a non-standard amino acid, pyrrolysine.

Belongs to the monomethylamine methyltransferase family. As to quaternary structure, can form a complex with MtmC.

The catalysed reaction is Co(I)-[methylamine-specific corrinoid protein] + methylamine + H(+) = methyl-Co(III)-[methylamine-specific corrinoid protein] + NH4(+). Its pathway is one-carbon metabolism; methanogenesis from methylamine. Functionally, catalyzes the transfer of the methyl group from monomethylamine to the corrinoid cofactor of MtmC. The chain is Monomethylamine methyltransferase MtmB1 (mtmB1) from Methanosarcina acetivorans (strain ATCC 35395 / DSM 2834 / JCM 12185 / C2A).